Here is a 113-residue protein sequence, read N- to C-terminus: UPF0102 protein CHU_0465 (113 aa).

The protein belongs to the UPF0102 family.

The polypeptide is UPF0102 protein CHU_0465 (Cytophaga hutchinsonii (strain ATCC 33406 / DSM 1761 / CIP 103989 / NBRC 15051 / NCIMB 9469 / D465)).